The chain runs to 341 residues: tRNA N6-adenosine threonylcarbamoyltransferase (341 aa).

Positions 111 and 115 each coordinate Fe cation. Substrate-binding positions include 134-138 (LVSGG), Asp167, Gly180, and Asn276. Asp304 provides a ligand contact to Fe cation.

Belongs to the KAE1 / TsaD family. Fe(2+) serves as cofactor.

It localises to the cytoplasm. The enzyme catalyses L-threonylcarbamoyladenylate + adenosine(37) in tRNA = N(6)-L-threonylcarbamoyladenosine(37) in tRNA + AMP + H(+). In terms of biological role, required for the formation of a threonylcarbamoyl group on adenosine at position 37 (t(6)A37) in tRNAs that read codons beginning with adenine. Is involved in the transfer of the threonylcarbamoyl moiety of threonylcarbamoyl-AMP (TC-AMP) to the N6 group of A37, together with TsaE and TsaB. TsaD likely plays a direct catalytic role in this reaction. The chain is tRNA N6-adenosine threonylcarbamoyltransferase from Pseudomonas entomophila (strain L48).